The primary structure comprises 292 residues: Probable septum site-determining protein MinC (292 aa).

The segment at 112–188 (DTAPPNDVAT…PQSSSALVIT (77 aa)) is disordered. The segment covering 128 to 137 (EATAEAAAKA) has biased composition (low complexity). Over residues 140–150 (QDDEAYGEQAD) the composition is skewed to acidic residues. The segment covering 171-185 (ANRPTATPPQSSSAL) has biased composition (polar residues).

This sequence belongs to the MinC family. In terms of assembly, interacts with MinD and FtsZ.

In terms of biological role, cell division inhibitor that blocks the formation of polar Z ring septums. Rapidly oscillates between the poles of the cell to destabilize FtsZ filaments that have formed before they mature into polar Z rings. Prevents FtsZ polymerization. This is Probable septum site-determining protein MinC from Bordetella bronchiseptica (strain ATCC BAA-588 / NCTC 13252 / RB50) (Alcaligenes bronchisepticus).